We begin with the raw amino-acid sequence, 333 residues long: Phosphate acyltransferase (333 aa).

The protein belongs to the PlsX family. As to quaternary structure, homodimer. Probably interacts with PlsY.

The protein resides in the cytoplasm. The enzyme catalyses a fatty acyl-[ACP] + phosphate = an acyl phosphate + holo-[ACP]. It participates in lipid metabolism; phospholipid metabolism. Its function is as follows. Catalyzes the reversible formation of acyl-phosphate (acyl-PO(4)) from acyl-[acyl-carrier-protein] (acyl-ACP). This enzyme utilizes acyl-ACP as fatty acyl donor, but not acyl-CoA. The sequence is that of Phosphate acyltransferase from Enterococcus faecalis (strain ATCC 700802 / V583).